The following is a 287-amino-acid chain: Ribosomal RNA small subunit methyltransferase A (287 aa).

Residues Asn28, Leu30, Gly55, Glu77, Asp103, and Asn123 each coordinate S-adenosyl-L-methionine.

This sequence belongs to the class I-like SAM-binding methyltransferase superfamily. rRNA adenine N(6)-methyltransferase family. RsmA subfamily.

Its subcellular location is the cytoplasm. It catalyses the reaction adenosine(1518)/adenosine(1519) in 16S rRNA + 4 S-adenosyl-L-methionine = N(6)-dimethyladenosine(1518)/N(6)-dimethyladenosine(1519) in 16S rRNA + 4 S-adenosyl-L-homocysteine + 4 H(+). Functionally, specifically dimethylates two adjacent adenosines (A1518 and A1519) in the loop of a conserved hairpin near the 3'-end of 16S rRNA in the 30S particle. May play a critical role in biogenesis of 30S subunits. This is Ribosomal RNA small subunit methyltransferase A from Rhodopseudomonas palustris (strain HaA2).